Reading from the N-terminus, the 227-residue chain is Uracil-DNA glycosylase (227 aa).

The Proton acceptor role is filled by Asp-68.

The protein belongs to the uracil-DNA glycosylase (UDG) superfamily. UNG family.

It is found in the cytoplasm. The enzyme catalyses Hydrolyzes single-stranded DNA or mismatched double-stranded DNA and polynucleotides, releasing free uracil.. Excises uracil residues from the DNA which can arise as a result of misincorporation of dUMP residues by DNA polymerase or due to deamination of cytosine. In Mycobacterium sp. (strain JLS), this protein is Uracil-DNA glycosylase.